Here is a 270-residue protein sequence, read N- to C-terminus: Sec-independent protein translocase protein TatC (270 aa).

The next 6 membrane-spanning stretches (helical) occupy residues 35 to 55 (LILS…YRVQ), 93 to 113 (AFWA…WAFI), 124 to 144 (WGLP…VFGY), 176 to 196 (VVTF…AVIL), 209 to 229 (QGWR…TPTP), and 231 to 251 (PANM…GVVL).

The protein belongs to the TatC family. As to quaternary structure, forms a complex with TatA.

The protein localises to the cell membrane. Functionally, part of the twin-arginine translocation (Tat) system that transports large folded proteins containing a characteristic twin-arginine motif in their signal peptide across membranes. The protein is Sec-independent protein translocase protein TatC of Deinococcus radiodurans (strain ATCC 13939 / DSM 20539 / JCM 16871 / CCUG 27074 / LMG 4051 / NBRC 15346 / NCIMB 9279 / VKM B-1422 / R1).